Consider the following 1176-residue polypeptide: Pesticidal crystal protein Cry1Aa (1176 aa).

Belongs to the delta endotoxin family.

Promotes colloidosmotic lysis by binding to the midgut epithelial cells of many lepidopteran larvae. This chain is Pesticidal crystal protein Cry1Aa (cry1Aa), found in Bacillus thuringiensis subsp. aizawai.